We begin with the raw amino-acid sequence, 992 residues long: Probable translation initiation factor IF-2 (992 aa).

In terms of domain architecture, DOD-type homing endonuclease spans 96–220; it reads KNWHGVTVTP…LSLALLRFGI (125 aa). The tr-type G domain maps to 399–616; the sequence is TTETHNFIAN…LIAGLSQRYL (218 aa). Residues 472-476 and 526-529 each bind GTP; these read DTPGH and NKID.

The protein belongs to the TRAFAC class translation factor GTPase superfamily. Classic translation factor GTPase family. IF-2 subfamily. In terms of processing, this protein undergoes a protein self splicing that involves a post-translational excision of the intervening region (intein) followed by peptide ligation.

Its function is as follows. Function in general translation initiation by promoting the binding of the formylmethionine-tRNA to ribosomes. Seems to function along with eIF-2. This is Probable translation initiation factor IF-2 (infB) from Pyrococcus abyssi (strain GE5 / Orsay).